Here is an 88-residue protein sequence, read N- to C-terminus: Putative cancer susceptibility gene HEPN1 protein (88 aa).

As to expression, expressed in liver. Expression is either down-regulated or lost in hepatocellular carcinomas (HCC).

It localises to the cytoplasm. In Homo sapiens (Human), this protein is Putative cancer susceptibility gene HEPN1 protein (HEPN1).